A 135-amino-acid chain; its full sequence is Basic phospholipase A2 KBf-VA (135 aa).

Intrachain disulfides connect cysteine 28–cysteine 87, cysteine 42–cysteine 134, cysteine 44–cysteine 60, cysteine 59–cysteine 115, cysteine 66–cysteine 108, cysteine 76–cysteine 101, and cysteine 94–cysteine 106. Residues tyrosine 43, glycine 45, and glycine 47 each contribute to the Ca(2+) site. Histidine 63 is a catalytic residue. Residue aspartate 64 participates in Ca(2+) binding. The active site involves aspartate 109.

The protein belongs to the phospholipase A2 family. Group I subfamily. D49 sub-subfamily. Requires Ca(2+) as cofactor. In terms of tissue distribution, expressed by the venom gland.

It localises to the secreted. The catalysed reaction is a 1,2-diacyl-sn-glycero-3-phosphocholine + H2O = a 1-acyl-sn-glycero-3-phosphocholine + a fatty acid + H(+). Its function is as follows. Snake venom phospholipase A2 (PLA2) that inhibits neuromuscular transmission by blocking acetylcholine release from the nerve termini. PLA2 catalyzes the calcium-dependent hydrolysis of the 2-acyl groups in 3-sn-phosphoglycerides. The polypeptide is Basic phospholipase A2 KBf-VA (Bungarus fasciatus (Banded krait)).